The primary structure comprises 366 residues: Ribosomal RNA large subunit methyltransferase M (366 aa).

Residues Ser-188, 221 to 224 (CPGG), Asp-240, Asp-260, and Asp-277 contribute to the S-adenosyl-L-methionine site. The active-site Proton acceptor is the Lys-306.

Belongs to the class I-like SAM-binding methyltransferase superfamily. RNA methyltransferase RlmE family. RlmM subfamily. As to quaternary structure, monomer.

It localises to the cytoplasm. The enzyme catalyses cytidine(2498) in 23S rRNA + S-adenosyl-L-methionine = 2'-O-methylcytidine(2498) in 23S rRNA + S-adenosyl-L-homocysteine + H(+). Its function is as follows. Catalyzes the 2'-O-methylation at nucleotide C2498 in 23S rRNA. This Escherichia coli O139:H28 (strain E24377A / ETEC) protein is Ribosomal RNA large subunit methyltransferase M.